The primary structure comprises 854 residues: Protein SEY1 homolog (854 aa).

The Cytoplasmic segment spans residues 1 to 724 (MAAFSGETAV…LRNIESGKQS (724 aa)). One can recognise a GB1/RHD3-type G domain in the interval 49–291 (GVNYHVVGVF…NSNFLFSNCS (243 aa)). A GTP-binding site is contributed by 59-66 (GGQSSGKS). Positions 336 to 386 (KHAAIEEFKEVCEEYTKKIQRGDVIPQFTRALEETIERLLKNFSDQTKLYK) form a coiled coil. Residues 725–745 (LPPWVLPVMLLLGWNELYYLL) form a helical membrane-spanning segment. Residues 746-748 (TSP) are Lumenal-facing. Residues 749–769 (ILLIAIIVIAVLFFKTFLKSQ) traverse the membrane as a helical segment. Residues 770-854 (LEVLEEKCPV…CRESRDKGED (85 aa)) are Cytoplasmic-facing. Residues 808–854 (GGGGAQFRDPTQATSVSGASAGVSSESSSAASPRRRVCRESRDKGED) form a disordered region. A compositionally biased stretch (low complexity) spans 822–839 (SVSGASAGVSSESSSAAS). The span at 845–854 (CRESRDKGED) shows a compositional bias: basic and acidic residues.

The protein belongs to the TRAFAC class dynamin-like GTPase superfamily. GB1/RHD3 GTPase family. RHD3 subfamily.

Its subcellular location is the endoplasmic reticulum membrane. In terms of biological role, probable GTP-binding protein that may be involved in cell development. The polypeptide is Protein SEY1 homolog (Trypanosoma brucei brucei (strain 927/4 GUTat10.1)).